The primary structure comprises 214 residues: Thymidylate kinase (214 aa).

10 to 17 is a binding site for ATP; it reads GPDGAGKT.

The protein belongs to the thymidylate kinase family.

The catalysed reaction is dTMP + ATP = dTDP + ADP. Phosphorylation of dTMP to form dTDP in both de novo and salvage pathways of dTTP synthesis. The sequence is that of Thymidylate kinase from Limosilactobacillus fermentum (strain NBRC 3956 / LMG 18251) (Lactobacillus fermentum).